Here is a 228-residue protein sequence, read N- to C-terminus: Phosphoglycolate phosphatase 1 (228 aa).

The active-site Nucleophile is the Asp-8. Mg(2+) contacts are provided by Asp-8 and Asp-10. Lys-149 is a binding site for substrate. Residues Asp-172 and Asp-176 each coordinate Mg(2+).

This sequence belongs to the archaeal SPP-like hydrolase family. Requires Mg(2+) as cofactor.

It carries out the reaction 2-phosphoglycolate + H2O = glycolate + phosphate. Functionally, catalyzes the dephosphorylation of 2-phosphoglycolate. This chain is Phosphoglycolate phosphatase 1, found in Saccharolobus solfataricus (strain ATCC 35092 / DSM 1617 / JCM 11322 / P2) (Sulfolobus solfataricus).